The sequence spans 329 residues: Signal recognition particle receptor FtsY (329 aa).

Residues 127 to 134 (GVNGVGKT), 209 to 213 (DTAGR), and 273 to 276 (TKLD) each bind GTP.

The protein belongs to the GTP-binding SRP family. FtsY subfamily. Part of the signal recognition particle protein translocation system, which is composed of SRP and FtsY.

It is found in the cell membrane. The protein resides in the cytoplasm. It catalyses the reaction GTP + H2O = GDP + phosphate + H(+). Its function is as follows. Involved in targeting and insertion of nascent membrane proteins into the cytoplasmic membrane. Acts as a receptor for the complex formed by the signal recognition particle (SRP) and the ribosome-nascent chain (RNC). The sequence is that of Signal recognition particle receptor FtsY from Bacillus subtilis (strain 168).